The primary structure comprises 377 residues: Succinyl-diaminopimelate desuccinylase 2 (377 aa).

Residue histidine 62 participates in Zn(2+) binding. Residue aspartate 64 is part of the active site. Aspartate 95 is a Zn(2+) binding site. Glutamate 129 functions as the Proton acceptor in the catalytic mechanism. Positions 130, 158, and 350 each coordinate Zn(2+).

Belongs to the peptidase M20A family. DapE subfamily. In terms of assembly, homodimer. Requires Zn(2+) as cofactor. Co(2+) is required as a cofactor.

The catalysed reaction is N-succinyl-(2S,6S)-2,6-diaminopimelate + H2O = (2S,6S)-2,6-diaminopimelate + succinate. It participates in amino-acid biosynthesis; L-lysine biosynthesis via DAP pathway; LL-2,6-diaminopimelate from (S)-tetrahydrodipicolinate (succinylase route): step 3/3. Functionally, catalyzes the hydrolysis of N-succinyl-L,L-diaminopimelic acid (SDAP), forming succinate and LL-2,6-diaminopimelate (DAP), an intermediate involved in the bacterial biosynthesis of lysine and meso-diaminopimelic acid, an essential component of bacterial cell walls. In Shewanella loihica (strain ATCC BAA-1088 / PV-4), this protein is Succinyl-diaminopimelate desuccinylase 2.